A 205-amino-acid chain; its full sequence is MKNYHDIVLALAGVCQSAKLVHQLATESRADSDTFLTALNSLFITQPQRIEDVFGGEVRHLKLGLETLIHQLNAQGDQNLTRYWLSLLALEGKLSKNPDAKQTLGNRISRLKEQEIHYARDSETMLSIMANIYSDIISPLGKKIHILGSPDYLRQELVQNKIRAVLLAGIRSAVLWKQMGGTKWQILFFRRKLLATAKQIYSSIY.

This sequence belongs to the HflD family.

It localises to the cytoplasm. The protein resides in the cell inner membrane. The sequence is that of High frequency lysogenization protein HflD homolog from Haemophilus influenzae (strain PittEE).